The sequence spans 930 residues: uncharacterized protein (930 aa).

Residues 434 to 441 (IRRGISRK) carry the Nuclear localization signal motif.

Its subcellular location is the nucleus. This is an uncharacterized protein from Chaetomium thermophilum (strain DSM 1495 / CBS 144.50 / IMI 039719) (Thermochaetoides thermophila).